Reading from the N-terminus, the 171-residue chain is T-cell surface glycoprotein CD3 delta chain (171 aa).

The signal sequence occupies residues 1 to 21 (MEHSRFLSGLILAAFLSRVSP). Topologically, residues 22 to 104 (YEVEMEELED…NCVELDSATL (83 aa)) are extracellular. A disulfide bridge links Cys-37 with Cys-72. Asn-38 carries an N-linked (GlcNAc...) asparagine glycan. The helical transmembrane segment at 105-125 (AGIIVTDIIATLLLALGVYCF) threads the bilayer. At 126–171 (AGHEMGRFSRAADTQDLLRNDQLYQPLRDRNDGQYSRLGENWARNK) the chain is on the cytoplasmic side. The ITAM domain occupies 138–166 (DTQDLLRNDQLYQPLRDRNDGQYSRLGEN). Phosphotyrosine is present on residues Tyr-149 and Tyr-160.

As to quaternary structure, the TCR-CD3 complex is composed of a CD3D/CD3E and a CD3G/CD3E heterodimers that preferentially associate with TCRalpha and TCRbeta, respectively, to form TCRalpha/CD3E/CD3G and TCRbeta/CD3G/CD3E trimers. In turn, the hexamer interacts with CD3Z homodimer to form the TCR-CD3 complex. Alternatively, TCRalpha and TCRbeta can be replaced by TCRgamma and TCRdelta. Interacts with coreceptors CD4 and CD8. In terms of processing, phosphorylated on Tyr residues after T-cell receptor triggering by LCK in association with CD4/CD8. CD3D is mostly present on T-lymphocytes with its TCR-CD3 partners. Present also in fetal NK-cells.

It is found in the cell membrane. Functionally, part of the TCR-CD3 complex present on T-lymphocyte cell surface that plays an essential role in adaptive immune response. When antigen presenting cells (APCs) activate T-cell receptor (TCR), TCR-mediated signals are transmitted across the cell membrane by the CD3 chains CD3D, CD3E, CD3G and CD3Z. All CD3 chains contain immunoreceptor tyrosine-based activation motifs (ITAMs) in their cytoplasmic domain. Upon TCR engagement, these motifs become phosphorylated by Src family protein tyrosine kinases LCK and FYN, resulting in the activation of downstream signaling pathways. In addition of this role of signal transduction in T-cell activation, CD3D plays an essential role in thymocyte differentiation. Indeed, participates in correct intracellular TCR-CD3 complex assembly and surface expression. In absence of a functional TCR-CD3 complex, thymocytes are unable to differentiate properly. Interacts with CD4 and CD8 and thus serves to establish a functional link between the TCR and coreceptors CD4 and CD8, which is needed for activation and positive selection of CD4 or CD8 T-cells. The protein is T-cell surface glycoprotein CD3 delta chain (CD3D) of Sus scrofa (Pig).